The sequence spans 103 residues: Large ribosomal subunit protein bL21 (103 aa).

It belongs to the bacterial ribosomal protein bL21 family. As to quaternary structure, part of the 50S ribosomal subunit. Contacts protein L20.

Functionally, this protein binds to 23S rRNA in the presence of protein L20. The polypeptide is Large ribosomal subunit protein bL21 (Pectobacterium carotovorum subsp. carotovorum (strain PC1)).